A 1577-amino-acid chain; its full sequence is MHFLFFFANRQFLSLKCPQAEFVWIPHPVHGYITGKFIQEDYGGTSYCQTEEGESLSVACAPSQLAKVAKSVLDKSVDDLVQMDDINEAMIVHNLRKRFKNDQIYTNIGTILISVNPFKRLPLYTPTVMDQYMHKVPKEMPPHTYNIADDAYRAMIDNRMNQSILISGESGAGKTECTKQCLTYFAELAGSTNGVEQNILLANPILESFGNAKTLRNNSSRFGKWVEIHFDQKGSICGASTINHLLEKSRVVYQIKGERNFRIVATELVKAPPRSRGGGGSSPARPESFKFLSQSGCIDVEGVDDVKEFEERVLCHGQARVRVQFSEDDINNCMELISAILHLGNFEFVSGQGKNVETSTVANREEVKIVATLLKVDPATLEQNVTSKLMEIKGCDPTRIPLTPVQATDATNALAKAIYSKLFDWLVKKINESMEPQKGAKTTTIGVLDIFGFEIFDKNSFEQLCINFTNEKLQQHFNQYTFKLEEKLYQSEEVKYEHITFIDNQPVLDLIEKKQPQGLMLVLDEQISIPKSSDATFFIKANQTQAARSTQLRGGEDSRTDFIIKHYAGDVIYDSTGMLEKNKDTLQKDLLVLSESSKQKLMKLLFPPSEGDQKTSKVTLGGQFRKQLDSLMTALNATEPHYIRCIKPNSEKQADLFHGFMSLQQLRYAGVFEAVRIRQTGYPFRYSHENFLKRYGFLVKDIHKRYGPNLKQNCDLLLKSMKGDCXSKVQVGKTRVLYRAPEQRGLELQRNIAVERVTIQIQAGVRRMFARRLYKRMRAIKPVLLNAIKSRSLSVLEQAIDAAKDIEFDMKLIRDCKELRSVILKEMEITKKLTDYIGAPPNHKTYLQVEPLYAQLCAVLTEAESINYSTPLVETGQQIKYMIAQRVETREQLKQAVDGAVRVDLEAAIARAEQIGLEESEPTLAAGRQELQRIYREEELVAELLNALAVGMAMRTSETTWDHAAIDAHTLGSAIYAAESFGFRTEQGRLTLDEAKVIVEVRQHLAADDYESLSMTLKKATTTLNKNSMSQSTKTEIDEAYEELSHNTAVNDLIEKVVQAIQDHDQEMLDYGVQQADSLRITDRPEMMQATELLNRIVNARALLREGITNVDQAQLETALADAASFAYTREEVPTAQQLLDRIYVINHDADVGLYYMEKEPLERAWAGAQEINLKTAQIDEVRNVLANDEQKFIQEQLKTANRLGDQARAIRLNIKLKEIFFGQFGKMFVFEQFGGLRKPEDFAKAKLLGREALKLGMFKWTKSPIPTSLTTLDQLAVKSATRLFKNVLGFMGDRPLPYPNALAQDLLEQCLAAPELRNEVYCQIIKQLTENPSPQSVTKGWQLMRCCLQTFPPSEEFANCLEMFLAAKGKDDKYIEMLHDTQYGDKRTSAPNVEQILAAKQYVTRIDLNQSTQVDTSVVPQGFVPEKLIADDTEGVIRAGSRPAQARAQPGQQAQPAGAARQQAAAPVQAAAATASYDYGQQQQQQQQGYDQQQQAYGGGADYGQQQQQQDLPAEPTEEYKQVEVVYDYDGGGDAQRLVLVKGAIITVIKEYEGWAYGSTDDGQVGLYPINYTRPI.

One can recognise a Myosin motor domain in the interval 75 to 751 (KSVDDLVQMD…EQRGLELQRN (677 aa)). Lysine 119 is subject to N6,N6,N6-trimethyllysine. ATP is bound at residue 168 to 175 (GESGAGKT). 2 actin-binding regions span residues 628–650 (LDSL…KPNS) and 730–744 (QVGK…PEQR). The region spanning 755-782 (ERVTIQIQAGVRRMFARRLYKRMRAIKP) is the IQ domain. One can recognise a MyTH4 domain in the interval 1261-1401 (WTKSPIPTSL…PNVEQILAAK (141 aa)). Disordered stretches follow at residues 1442 to 1466 (SRPA…QQAA) and 1483 to 1516 (QQQQ…LPAE). Composition is skewed to low complexity over residues 1444 to 1466 (PAQA…QQAA) and 1483 to 1497 (QQQQ…QQQA). The SH3 domain maps to 1519–1577 (EEYKQVEVVYDYDGGGDAQRLVLVKGAIITVIKEYEGWAYGSTDDGQVGLYPINYTRPI).

Belongs to the TRAFAC class myosin-kinesin ATPase superfamily. Myosin family. Myosin I heavy chain is single-headed.

The sequence is that of High molecular weight form of myosin-1 from Acanthamoeba castellanii (Amoeba).